The sequence spans 277 residues: Phosphatidylglycerol--prolipoprotein diacylglyceryl transferase (277 aa).

The next 4 membrane-spanning stretches (helical) occupy residues 22–42 (WYGV…LSEA), 51–71 (IIVD…RIYY), 89–109 (IWHG…TAII), and 116–136 (ISFW…QAIG). Arg-137 provides a ligand contact to a 1,2-diacyl-sn-glycero-3-phospho-(1'-sn-glycerol). Transmembrane regions (helical) follow at residues 177–197 (QPTF…LLII), 205–225 (GELF…IEGM), and 235–255 (FRVS…LIIY).

The protein belongs to the Lgt family.

It is found in the cell membrane. It catalyses the reaction L-cysteinyl-[prolipoprotein] + a 1,2-diacyl-sn-glycero-3-phospho-(1'-sn-glycerol) = an S-1,2-diacyl-sn-glyceryl-L-cysteinyl-[prolipoprotein] + sn-glycerol 1-phosphate + H(+). It participates in protein modification; lipoprotein biosynthesis (diacylglyceryl transfer). Its function is as follows. Catalyzes the transfer of the diacylglyceryl group from phosphatidylglycerol to the sulfhydryl group of the N-terminal cysteine of a prolipoprotein, the first step in the formation of mature lipoproteins. The polypeptide is Phosphatidylglycerol--prolipoprotein diacylglyceryl transferase (Listeria welshimeri serovar 6b (strain ATCC 35897 / DSM 20650 / CCUG 15529 / CIP 8149 / NCTC 11857 / SLCC 5334 / V8)).